The sequence spans 553 residues: Urocanate hydratase (553 aa).

NAD(+)-binding positions include 45-46 (GG), Gln123, 169-171 (GMG), Asp189, Arg194, 235-236 (NA), 256-260 (QTSAH), 266-267 (YV), Tyr315, and Gly485.

It belongs to the urocanase family. NAD(+) is required as a cofactor.

Its subcellular location is the cytoplasm. The enzyme catalyses 4-imidazolone-5-propanoate = trans-urocanate + H2O. It functions in the pathway amino-acid degradation; L-histidine degradation into L-glutamate; N-formimidoyl-L-glutamate from L-histidine: step 2/3. Catalyzes the conversion of urocanate to 4-imidazolone-5-propionate. In Staphylococcus aureus (strain Mu50 / ATCC 700699), this protein is Urocanate hydratase.